A 240-amino-acid chain; its full sequence is MGQKIHPVGFRLGITKEHLSRWYADPKQYPALVQEDYKIRQHIDANLNNAGISKVLIERKADQVDLEIHTARPGVVVGRGGSGIEALRTGLQDVLGDQRQIRINVVEVNRVDADAALIAEYIVQQLERRVSFRRVVRQAVQRAQRAEVQGIKIQVSGRLNGAEIARTEWVREGRVPLHTLRADIDYSYKTAQTIYGILGIKVWIFKGEIIPGQEETSAANAAPLPRRKSRRQQFEDRSEQ.

The KH type-2 domain occupies 39–109; that stretch reads IRQHIDANLN…QIRINVVEVN (71 aa). Residues 216–240 form a disordered region; the sequence is TSAANAAPLPRRKSRRQQFEDRSEQ.

The protein belongs to the universal ribosomal protein uS3 family. As to quaternary structure, part of the 30S ribosomal subunit. Forms a tight complex with proteins S10 and S14.

Binds the lower part of the 30S subunit head. Binds mRNA in the 70S ribosome, positioning it for translation. The chain is Small ribosomal subunit protein uS3 from Picosynechococcus sp. (strain ATCC 27264 / PCC 7002 / PR-6) (Agmenellum quadruplicatum).